The chain runs to 128 residues: Large ribosomal subunit protein bL17 (128 aa).

Belongs to the bacterial ribosomal protein bL17 family. Part of the 50S ribosomal subunit. Contacts protein L32.

In Enterobacter sp. (strain 638), this protein is Large ribosomal subunit protein bL17.